The primary structure comprises 176 residues: Ribosome maturation factor RimM (176 aa).

One can recognise a PRC barrel domain in the interval 100–173 (PGEFHLLDLL…WLMVCPPPGL (74 aa)).

This sequence belongs to the RimM family. Binds ribosomal protein uS19.

The protein localises to the cytoplasm. Functionally, an accessory protein needed during the final step in the assembly of 30S ribosomal subunit, possibly for assembly of the head region. Essential for efficient processing of 16S rRNA. May be needed both before and after RbfA during the maturation of 16S rRNA. It has affinity for free ribosomal 30S subunits but not for 70S ribosomes. The chain is Ribosome maturation factor RimM from Prochlorococcus marinus (strain SARG / CCMP1375 / SS120).